Here is a 357-residue protein sequence, read N- to C-terminus: Guanine nucleotide-binding protein alpha-1 subunit (357 aa).

Glycine 2 is lipidated: N-myristoyl glycine. A lipid anchor (S-palmitoyl cysteine) is attached at cysteine 4. Residues 32 to 357 form the G-alpha domain; that stretch reads NIIKLLLLGA…STKLKGCGLY (326 aa). Residues 35-48 form a G1 motif region; sequence KLLLLGAGESGKST. Glutamate 43, serine 44, glycine 45, lysine 46, serine 47, threonine 48, aspartate 151, leucine 176, threonine 182, glycine 204, asparagine 270, lysine 271, aspartate 273, and alanine 329 together coordinate GTP. Serine 47 contributes to the Mg(2+) binding site. The G2 motif stretch occupies residues 174–182; that stretch reads DILHTRVPT. Threonine 182 is a binding site for Mg(2+). Residues 197–206 are G3 motif; that stretch reads FRVFDVGGQR. The interval 266 to 273 is G4 motif; it reads ILFLNKID. The segment at 327-332 is G5 motif; that stretch reads TCATDT.

Belongs to the G-alpha family. As to quaternary structure, g proteins are composed of 3 units; alpha, beta and gamma. The alpha chain contains the guanine nucleotide binding site. Mg(2+) is required as a cofactor.

Guanine nucleotide-binding proteins (G proteins) are involved as modulators or transducers in various transmembrane signaling systems. The protein is Guanine nucleotide-binding protein alpha-1 subunit (gpa-1) of Caenorhabditis elegans.